The chain runs to 142 residues: Translation initiation factor 2 subunit beta (142 aa).

Belongs to the eIF-2-beta/eIF-5 family. In terms of assembly, heterotrimer composed of an alpha, a beta and a gamma chain.

Functionally, eIF-2 functions in the early steps of protein synthesis by forming a ternary complex with GTP and initiator tRNA. The protein is Translation initiation factor 2 subunit beta of Staphylothermus marinus (strain ATCC 43588 / DSM 3639 / JCM 9404 / F1).